Consider the following 167-residue polypeptide: Putative pre-16S rRNA nuclease (167 aa).

The segment at M1–R24 is disordered. Over residues R7–R21 the composition is skewed to basic and acidic residues.

This sequence belongs to the YqgF nuclease family.

It is found in the cytoplasm. In terms of biological role, could be a nuclease involved in processing of the 5'-end of pre-16S rRNA. The sequence is that of Putative pre-16S rRNA nuclease from Mycolicibacterium paratuberculosis (strain ATCC BAA-968 / K-10) (Mycobacterium paratuberculosis).